The sequence spans 277 residues: Phosphate import ATP-binding protein PstB (277 aa).

One can recognise an ABC transporter domain in the interval 31–272 (IEVPGLSLYY…PAKKQTEDYI (242 aa)). Residue 63–70 (GPSGCGKS) coordinates ATP.

It belongs to the ABC transporter superfamily. Phosphate importer (TC 3.A.1.7) family. The complex is composed of two ATP-binding proteins (PstB), two transmembrane proteins (PstC and PstA) and a solute-binding protein (PstS).

It is found in the cell inner membrane. The catalysed reaction is phosphate(out) + ATP + H2O = ADP + 2 phosphate(in) + H(+). Its function is as follows. Part of the ABC transporter complex PstSACB involved in phosphate import. Responsible for energy coupling to the transport system. The polypeptide is Phosphate import ATP-binding protein PstB (Pseudomonas fluorescens (strain ATCC BAA-477 / NRRL B-23932 / Pf-5)).